Here is a 295-residue protein sequence, read N- to C-terminus: MTQPFQRVLLVSKYHDPSVLPGLRQLRDFLLARDMPTFLESQSAADIGDSLGLPLLSFAEADAGSDLVIALGGDGTLLGTARQTAQSGIPILGINQGRLGFLADLSIHQISEALPPILEGHYQQDLRSILHAELWRSEERVHTGLAVNEVFIHKGGGESMIELQVQMDGRFVYTQRADGLIIATPTGSTAYAMSAGGPILTPTLAALLLVLICPHTLTARPLAVADSVEIVARLTASRQSAALSLDSHCSVPLEIGDEIVIRRASCAARFIHPEEENFFQILRGKLHWADSPGTD.

Catalysis depends on D74, which acts as the Proton acceptor. NAD(+)-binding positions include 74 to 75, 148 to 149, R176, D178, and 189 to 194; these read DG, NE, and TAYAMS.

It belongs to the NAD kinase family. A divalent metal cation is required as a cofactor.

The protein resides in the cytoplasm. The catalysed reaction is NAD(+) + ATP = ADP + NADP(+) + H(+). Involved in the regulation of the intracellular balance of NAD and NADP, and is a key enzyme in the biosynthesis of NADP. Catalyzes specifically the phosphorylation on 2'-hydroxyl of the adenosine moiety of NAD to yield NADP. The protein is NAD kinase of Acidithiobacillus ferrooxidans (strain ATCC 23270 / DSM 14882 / CIP 104768 / NCIMB 8455) (Ferrobacillus ferrooxidans (strain ATCC 23270)).